The primary structure comprises 185 residues: Large ribosomal subunit protein uL22 (185 aa).

The interval Val160 to Glu185 is disordered.

The protein belongs to the universal ribosomal protein uL22 family.

In Maconellicoccus hirsutus (Pink hibiscus mealybug), this protein is Large ribosomal subunit protein uL22 (RpL17).